The following is a 285-amino-acid chain: Bifunctional protein FolD (285 aa).

NADP(+) is bound by residues 165–167 (GRS) and Ser190.

The protein belongs to the tetrahydrofolate dehydrogenase/cyclohydrolase family. In terms of assembly, homodimer.

It catalyses the reaction (6R)-5,10-methylene-5,6,7,8-tetrahydrofolate + NADP(+) = (6R)-5,10-methenyltetrahydrofolate + NADPH. It carries out the reaction (6R)-5,10-methenyltetrahydrofolate + H2O = (6R)-10-formyltetrahydrofolate + H(+). It functions in the pathway one-carbon metabolism; tetrahydrofolate interconversion. In terms of biological role, catalyzes the oxidation of 5,10-methylenetetrahydrofolate to 5,10-methenyltetrahydrofolate and then the hydrolysis of 5,10-methenyltetrahydrofolate to 10-formyltetrahydrofolate. This chain is Bifunctional protein FolD, found in Burkholderia pseudomallei (strain 1106a).